Reading from the N-terminus, the 502-residue chain is Glycerol kinase (502 aa).

T14 lines the ADP pocket. 3 residues coordinate ATP: T14, T15, and S16. T14 lines the sn-glycerol 3-phosphate pocket. Residue R18 participates in ADP binding. Sn-glycerol 3-phosphate contacts are provided by R84, E85, Y136, and D246. Glycerol-binding residues include R84, E85, Y136, D246, and Q247. ADP contacts are provided by T268 and G311. 4 residues coordinate ATP: T268, G311, Q315, and G412. Positions 412 and 416 each coordinate ADP.

The protein belongs to the FGGY kinase family. As to quaternary structure, homotetramer and homodimer (in equilibrium). Heterodimer with EIIA-Glc. Binds 1 zinc ion per glycerol kinase EIIA-Glc dimer. The zinc ion is important for dimerization.

The catalysed reaction is glycerol + ATP = sn-glycerol 3-phosphate + ADP + H(+). The protein operates within polyol metabolism; glycerol degradation via glycerol kinase pathway; sn-glycerol 3-phosphate from glycerol: step 1/1. Its activity is regulated as follows. Activity of this regulatory enzyme is affected by several metabolites. Allosterically and non-competitively inhibited by fructose 1,6-bisphosphate (FBP) and unphosphorylated phosphocarrier protein EIIA-Glc (III-Glc), an integral component of the bacterial phosphotransferase (PTS) system. Its function is as follows. Key enzyme in the regulation of glycerol uptake and metabolism. Catalyzes the phosphorylation of glycerol to yield sn-glycerol 3-phosphate. The chain is Glycerol kinase from Salmonella agona (strain SL483).